A 546-amino-acid chain; its full sequence is Tyrosine-protein kinase yes (546 aa).

Positions 1 to 18 (MGCVKSKEDKGPTQKYRP) are enriched in basic and acidic residues. Positions 1–58 (MGCVKSKEDKGPTQKYRPDPTNPTPGSHMGLYGPDPTQMGQSPALKGPTNNYNSRSSG) are disordered. Gly2 carries the N-myristoyl glycine lipid modification. Cys3 carries the S-palmitoyl cysteine; in membrane form lipid modification. Positions 48 to 58 (PTNNYNSRSSG) are enriched in polar residues. Residues 94–155 (GGVTFFVALY…PSNYVAPADS (62 aa)) enclose the SH3 domain. An SH2 domain is found at 161–258 (WYFGKMGRKD…GLCYRLTTVC (98 aa)). In terms of domain architecture, Protein kinase spans 280-533 (LRLELKLGQG…YIQSFLEDYF (254 aa)). ATP is bound by residues 286 to 294 (LGQGCFGEV) and Lys308. Asp399 acts as the Proton acceptor in catalysis. Tyr429 is modified (phosphotyrosine; by autocatalysis). Tyr540 is modified (phosphotyrosine; by CSK).

It belongs to the protein kinase superfamily. Tyr protein kinase family. SRC subfamily. Autophosphorylation at Tyr-429 maintains enzyme activity. Post-translationally, palmitoylation at Cys-3 promotes membrane localization. As to expression, widely expressed.

Its subcellular location is the cell membrane. The protein localises to the cytoplasm. It is found in the cytoskeleton. The protein resides in the microtubule organizing center. It localises to the centrosome. Its subcellular location is the cytosol. The protein localises to the cell junction. It catalyses the reaction L-tyrosyl-[protein] + ATP = O-phospho-L-tyrosyl-[protein] + ADP + H(+). Non-receptor protein tyrosine kinase that is involved in the regulation of cell growth and survival, apoptosis, cell-cell adhesion, cytoskeleton remodeling, differentiation, G2/M progression and cytokinesis. Required for convergent extension cell movements during gastrulation, acting with fyna via rhoa. May be required for epiboly to occur, possibly through its effects in calcium signaling. During embryonic development, phosphorylates ptk2.1/fak. This is Tyrosine-protein kinase yes (yes1) from Danio rerio (Zebrafish).